The chain runs to 336 residues: Fructose-1,6-bisphosphatase class 1 (336 aa).

Residues Glu90, Asp112, Leu114, and Asp115 each coordinate Mg(2+). Substrate contacts are provided by residues 115–118 (DGSS), Asn211, and Lys277. Position 283 (Glu283) interacts with Mg(2+).

Belongs to the FBPase class 1 family. Homotetramer. Mg(2+) is required as a cofactor.

The protein localises to the cytoplasm. The catalysed reaction is beta-D-fructose 1,6-bisphosphate + H2O = beta-D-fructose 6-phosphate + phosphate. The protein operates within carbohydrate biosynthesis; gluconeogenesis. In Stutzerimonas stutzeri (strain A1501) (Pseudomonas stutzeri), this protein is Fructose-1,6-bisphosphatase class 1.